Consider the following 535-residue polypeptide: MAASSLEQKLSRLEAKLKQENREARRRIDLNLDISPQRPRPIIVITLSPAPAPSQRAALQLPLANDGGSRSPSSESSPQHPTPPTRPRHMLGLPSTLFTPRSMESIEIDQKLQEIMKQTGYLTIGGQRYQAEINDLENLGEMGSGTCGQVWKMRFRKTGHIIAVKQMRRSGNKEENKRILMDLDVVLKSHDCPYIVQCFGTFITNTDVFIAMELMGTCAEKLKKRMQGPIPERILGKMTVAIVKALYYLKEKHGVIHRDVKPSNILLDERGQIKLCDFGISGRLVDSKAKTRSAGCAAYMAPERIDPPDPTKPDYDIRADVWSLGISLVELATGQFPYKNCKTDFEVLTKVLQEEPPLLPGHMGFSGDFQSFVKDCLTKDHRKRPKYNKLLEHSFIKHYEILEVDVASWFKDVMAKTESPRTSGVLSQHHLPFFSTSVTWGAWPLAAQTPFQSGVIRCRGRVPSPRRATGGSGGQPCVCAGGPGPSFTEMGPSPSPMLSNTFFTPDPGACPGASTWGLPRRRLCQLLTTSTPGCC.

Ala2 carries the N-acetylalanine modification. The stretch at Ala2 to Leu30 forms a coiled coil. The interval Gln37–Ser73 is d domain. The interval Leu63–Leu93 is disordered. Positions Ser69–Gln79 are enriched in low complexity. The Protein kinase domain occupies Leu136–Ile396. ATP contacts are provided by residues Met142–Val150 and Lys165. The active-site Proton acceptor is Asp259. At Ser287 the chain carries Phosphoserine; by MAP3K. A Phosphothreonine; by MAP3K modification is found at Thr291. The interval His393–Lys416 is DVD domain. Ser427 carries the post-translational modification Phosphoserine.

Belongs to the protein kinase superfamily. STE Ser/Thr protein kinase family. MAP kinase kinase subfamily. As to quaternary structure, interacts with RASSF7, the interaction promotes phosphorylation. Interacts with VRK2. Interacts (via its D domain) with its substrates MAPK8/JNK1, MAPK9/JNK2 and MAPK10/JNK3. Interacts (via its DVD domain) with MAP3Ks activators like MAP3K5/ASK1 and MAP3K1/MEKK1. Interacts with SH3RF1, MAPK8IP1/JIP1, MAPK8IP2/JIP2 and MAPK8IP3/JIP3 scaffold proteins. Found in a complex with SH3RF1, RAC1, MAP3K11/MLK3, MAPK8IP1/JIP1 and MAPK8/JNK1. Found in a complex with SH3RF1, RAC2, MAP3K7/TAK1, MAPK8IP1/JIP1, MAPK8/JNK1 and MAPK9/JNK2. Requires Mg(2+) as cofactor. In terms of processing, activated by phosphorylation on Ser-287 and Thr-291 by MAP kinase kinase kinases (MAP3Ks). As to expression, expressed at high levels in brain, lung, liver, skeletal muscle, kidney, and testis and at lower levels in the heart and spleen.

It is found in the nucleus. The protein resides in the cytoplasm. It carries out the reaction L-seryl-[protein] + ATP = O-phospho-L-seryl-[protein] + ADP + H(+). It catalyses the reaction L-threonyl-[protein] + ATP = O-phospho-L-threonyl-[protein] + ADP + H(+). The catalysed reaction is L-tyrosyl-[protein] + ATP = O-phospho-L-tyrosyl-[protein] + ADP + H(+). With respect to regulation, activated by phosphorylation by specific MAP kinase kinase kinases such as MAP3K1/MEKK1, MAP3K3/MEKK3, MAP3K11/MLK3 and MAP3K12/DLK. Isoforms 3 and 4 have lower basal activity but a higher level of inducible activation, than isoforms 2, 6, 7 and 8. In terms of biological role, dual specificity protein kinase which acts as an essential component of the MAP kinase signal transduction pathway. Essential component of the stress-activated protein kinase/c-Jun N-terminal kinase (SAP/JNK) signaling pathway. With MAP2K4/MKK4, is the one of the only known kinase to directly activate the stress-activated protein kinase/c-Jun N-terminal kinases MAPK8/JNK1, MAPK9/JNK2 and MAPK10/JNK3. MAP2K4/MKK4 and MAP2K7/MKK7 both activate the JNKs by phosphorylation, but they differ in their preference for the phosphorylation site in the Thr-Pro-Tyr motif. MAP2K4/MKK4 shows preference for phosphorylation of the Tyr residue and MAP2K7/MKK7 for the Thr residue. The monophosphorylation of JNKs on the Thr residue is sufficient to increase JNK activity indicating that MAP2K7/MKK7 is important to trigger JNK activity, while the additional phosphorylation of the Tyr residue by MAP2K4/MKK4 ensures optimal JNK activation. Has a specific role in JNK signal transduction pathway activated by pro-inflammatory cytokines. The MKK/JNK signaling pathway is also involved in mitochondrial death signaling pathway, including the release cytochrome c, leading to apoptosis. Part of a non-canonical MAPK signaling pathway, composed of the upstream MAP3K12 kinase and downstream MAP kinases MAPK1/ERK2 and MAPK3/ERK1, that enhances the AP-1-mediated transcription of APP in response to APOE. This Mus musculus (Mouse) protein is Dual specificity mitogen-activated protein kinase kinase 7.